The chain runs to 408 residues: Succinylornithine transaminase (408 aa).

The residue at position 252 (Lys-252) is an N6-(pyridoxal phosphate)lysine.

Belongs to the class-III pyridoxal-phosphate-dependent aminotransferase family. AstC subfamily. Pyridoxal 5'-phosphate is required as a cofactor.

The catalysed reaction is N(2)-succinyl-L-ornithine + 2-oxoglutarate = N-succinyl-L-glutamate 5-semialdehyde + L-glutamate. The protein operates within amino-acid degradation; L-arginine degradation via AST pathway; L-glutamate and succinate from L-arginine: step 3/5. Its function is as follows. Catalyzes the transamination of N(2)-succinylornithine and alpha-ketoglutarate into N(2)-succinylglutamate semialdehyde and glutamate. Can also act as an acetylornithine aminotransferase. The polypeptide is Succinylornithine transaminase (Salmonella heidelberg (strain SL476)).